The primary structure comprises 147 residues: MLMPKRVKYRRVHRGRMKGKALKGNTLTYGDYGIQALGSCWLTANQIEAARRAMTRYIKRGGNIWIKVFPDKPVSKKPIGIRMGSGKGAPEYWVAVIKPGRVLFEMAGVPEDVAREAMRLAQHKLPIKTKFIAREEFGEKDGEADEN.

The protein belongs to the universal ribosomal protein uL16 family. As to quaternary structure, part of the 50S ribosomal subunit.

In terms of biological role, binds 23S rRNA and is also seen to make contacts with the A and possibly P site tRNAs. The sequence is that of Large ribosomal subunit protein uL16 from Finegoldia magna (strain ATCC 29328 / DSM 20472 / WAL 2508) (Peptostreptococcus magnus).